The sequence spans 688 residues: Translation initiation factor IF-2 (688 aa).

The segment at 62–103 (EFEVEEKVVRSKKNSNKKKKKGKGNEDKRQDNFAGRQQTQIV) is disordered. Residues 71–83 (RSKKNSNKKKKKG) show a composition bias toward basic residues. The 170-residue stretch at 190–359 (ERPAVVTIMG…LLVSEVEEYK (170 aa)) folds into the tr-type G domain. The interval 199–206 (GHVDHGKT) is G1. A GTP-binding site is contributed by 199–206 (GHVDHGKT). Residues 224 to 228 (GITQH) form a G2 region. Residues 245–248 (DTPG) are G3. Residues 245 to 249 (DTPGH) and 299 to 302 (NKMD) each bind GTP. The interval 299-302 (NKMD) is G4. The segment at 335–337 (SAI) is G5.

The protein belongs to the TRAFAC class translation factor GTPase superfamily. Classic translation factor GTPase family. IF-2 subfamily.

The protein resides in the cytoplasm. In terms of biological role, one of the essential components for the initiation of protein synthesis. Protects formylmethionyl-tRNA from spontaneous hydrolysis and promotes its binding to the 30S ribosomal subunits. Also involved in the hydrolysis of GTP during the formation of the 70S ribosomal complex. This chain is Translation initiation factor IF-2, found in Bacillus cereus (strain G9842).